We begin with the raw amino-acid sequence, 797 residues long: MSAKSRRPGTASSQTPNECVQVVVRCRPMSNRERSEGSPEVVNVYPNRGVVELQNVVDANKEQRKVFTYDAAYDASASQTTLYHEVVFPLVSSVLEGFNGCIFAYGQTGTGKTFTMEGVRGNDDLMGIIPRTFEQIWLHINRTENFQFLVDVSYLEIYMEELRDLLKPNSKHLEVRERGSGVYVPNLHAINCKSVDDMIRVMKVGNKNRTVGFTNMNEHSSRSHAIFMIKIEMCDTETNTIKVGKLNLIDLAGSERQSKTGASAERLKEASKINLALSSLGNVISALAESSPHVPYRDSKLTRLLQDSLGGNSKTIMIANIGPSNYNYNETLTTLRYASRAKSIQNQPIKNEDPQDAKLKEYQEEIERLKRLIAPQQQQRSEKQGTIKKQRVKKPKKEPISQELIGSALQASSADLQVDEDRDSDGDGAESESDKENEAEVAKSNEELERERVENAKLAAKLAELEGQLVRGGKNLLDTYSERQIELEKKLVEIAERKKREIEIQQQLELQEETTLEIRERNVSLEQEVELKKRKLSKCYAKYLALQQELNDCKHDHNQDLRELEMAQNELVKELKRQLLIIDNFVPIEVKQRLYTQAKYDEEQEEWKFSSFPLPLPPSGGDGRQGYRRPVSHPQRRRPTSEHALQEAKSNAPSSLRFKSENIVSYELEMPCRTTQEYRTPKVSASLQAVLAQAMQTGGDDIDIVDSHTNSLRSRLENIINANSSSNGGPGSGAGPLAANTAGSGVGSMPNVRNIKSSRGLPSAGTALDSNRRPPTGRIPAKKPASAYPKARGLVNK.

The region spanning 19–344 (CVQVVVRCRP…LRYASRAKSI (326 aa)) is the Kinesin motor domain. 106–113 (GQTGTGKT) is a binding site for ATP. The stretch at 350–384 (KNEDPQDAKLKEYQEEIERLKRLIAPQQQQRSEKQ) forms a coiled coil. Disordered stretches follow at residues 371-450 (RLIA…ELER), 610-656 (SSFP…PSSL), and 722-797 (ANSS…LVNK). The segment covering 386–396 (TIKKQRVKKPK) has biased composition (basic residues). Over residues 417–431 (QVDEDRDSDGDGAES) the composition is skewed to acidic residues. Residues 432–450 (ESDKENEAEVAKSNEELER) are compositionally biased toward basic and acidic residues. Positions 432 to 580 (ESDKENEAEV…LVKELKRQLL (149 aa)) form a coiled coil. Residues 626–638 (GYRRPVSHPQRRR) are compositionally biased toward basic residues. Low complexity predominate over residues 782–791 (KKPASAYPKA).

It belongs to the TRAFAC class myosin-kinesin ATPase superfamily. Kinesin family. Kinesin II subfamily.

Its subcellular location is the cytoplasm. It localises to the cytoskeleton. In terms of biological role, plus-end directed microtubule motor that may be used for anterograde axonal transport and could conceivably move cargos in fly neurons different than those moved by kinesin heavy chain or other plus-end directed motors. This chain is Kinesin-like protein Klp68D, found in Drosophila pseudoobscura pseudoobscura (Fruit fly).